A 295-amino-acid chain; its full sequence is Small ribosomal subunit protein uS2 (295 aa).

The residue at position 2 (Ser2) is an N-acetylserine. Phosphoserine is present on Ser43. Residue Lys52 is modified to N6-acetyllysine. The segment at 54–113 (TWEKLLLAARAIVAIENPADVSVISSRNTGQRAVLKFAAATGATPIAGRFTPGTFTNQIQ) is interaction with PPP1R16B. Lys89 bears the N6-acetyllysine; alternate mark. Lys89 is covalently cross-linked (Glycyl lysine isopeptide (Lys-Gly) (interchain with G-Cter in SUMO2); alternate). Phosphothreonine is present on Thr97. Laminin-binding regions lie at residues 161-180 (IPCNNKGAHSVGLMWWMLAR) and 205-229 (RDPEEIEKEEQAAAEKAVTKEEFQG). [DE]-W-[ST] repeat units lie at residues 230-232 (EWT), 247-249 (DWS), 266-268 (DWS), 275-277 (DWS), and 293-295 (EWS). Positions 242–295 (QPEVADWSEGVQVPSVPIQQFPTEDWSAQPATEDWSAAPTAQATEWVGTTTEWS) are laminin-binding. The interval 266 to 295 (DWSAQPATEDWSAAPTAQATEWVGTTTEWS) is disordered. Polar residues predominate over residues 280-295 (PTAQATEWVGTTTEWS).

This sequence belongs to the universal ribosomal protein uS2 family. Monomer (37LRP) and homodimer (67LR). Component of the small ribosomal subunit. Mature ribosomes consist of a small (40S) and a large (60S) subunit. The 40S subunit contains about 33 different proteins and 1 molecule of RNA (18S). The 60S subunit contains about 49 different proteins and 3 molecules of RNA (28S, 5.8S and 5S). Interacts with RPS21. Interacts with several laminins including at least LAMB1. Interacts with MDK. The mature dimeric form interacts with PPP1R16B (via its fourth ankyrin repeat). Interacts with PPP1CA only in the presence of PPP1R16B. Acylated. Acylation may be a prerequisite for conversion of the monomeric 37 kDa laminin receptor precursor (37LRP) to the mature dimeric 67 kDa laminin receptor (67LR), and may provide a mechanism for membrane association. In terms of processing, cleaved by stromelysin-3 (ST3) at the cell surface. Cleavage by stromelysin-3 may be a mechanism to alter cell-extracellular matrix interactions.

The protein localises to the cell membrane. It localises to the cytoplasm. The protein resides in the nucleus. Its function is as follows. Required for the assembly and/or stability of the 40S ribosomal subunit. Required for the processing of the 20S rRNA-precursor to mature 18S rRNA in a late step of the maturation of 40S ribosomal subunits. Also functions as a cell surface receptor for laminin. Plays a role in cell adhesion to the basement membrane and in the consequent activation of signaling transduction pathways. May play a role in cell fate determination and tissue morphogenesis. Also acts as a receptor for several other ligands, including the pathogenic prion protein, viruses, and bacteria. Acts as a PPP1R16B-dependent substrate of PPP1CA. This chain is Small ribosomal subunit protein uS2, found in Oryctolagus cuniculus (Rabbit).